Here is a 933-residue protein sequence, read N- to C-terminus: Progesterone receptor (933 aa).

The segment at 1–164 (MTELKAKGPR…PATQGVLSPL (164 aa)) is AF3; mediates transcriptional activation. Residues 1–256 (MTELKAKGPR…AAAGGGAAAV (256 aa)) are disordered. The segment at 1-566 (MTELKAKGPR…YSFESLPQKI (566 aa)) is modulating, Pro-Rich. Position 20 is a phosphoserine (S20). Residues 55–59 (LDGLL) carry the LXXL motif 1 motif. S81 is subject to Phosphoserine. An LXXL motif 2 motif is present at residues 115-119 (LETLL). Phosphoserine is present on residues S130 and S162. Positions 165-305 (MSRSGGKAGD…LATTVMDFIH (141 aa)) are mediates transcriptional transrepression. The short motif at 183–187 (KVLPR) is the Nuclear localization signal element. Residues S190 and S213 each carry the phosphoserine modification. Positions 220-231 (EVEEEDGSESEE) are enriched in acidic residues. A compositionally biased stretch (low complexity) spans 232–246 (SAGPLLKGKPRALGG). S294 bears the Phosphoserine; by MAPK1 mark. Positions 331–378 (GGAGAASAFAPPRSSPSASSTPVAVGDFPDCAYPPDAEPKDDAYPLYS) are disordered. Positions 335 to 350 (AASAFAPPRSSPSASS) are enriched in low complexity. Phosphoserine; by MAPK is present on S345. A Glycyl lysine isopeptide (Lys-Gly) (interchain with G-Cter in SUMO); alternate cross-link involves residue K388. A Glycyl lysine isopeptide (Lys-Gly) (interchain with G-Cter in ubiquitin); alternate cross-link involves residue K388. Position 400 is a phosphoserine; by CDK2 (S400). The disordered stretch occupies residues 415–452 (PDFPLGPPPPLPPRAPPSRPGEAAVTAAPASASVSSAS). Residues 418–433 (PLGPPPPLPPRAPPSR) are compositionally biased toward pro residues. Low complexity predominate over residues 434 to 452 (PGEAAVTAAPASASVSSAS). Residues 456 to 546 (STLECILYKA…VYPPYLNYLR (91 aa)) form an AF1; mediates transcriptional activation region. Residue K531 forms a Glycyl lysine isopeptide (Lys-Gly) (interchain with G-Cter in SUMO) linkage. 2 NR C4-type zinc fingers span residues 567 to 587 (CLICGDEASGCHYGVLTCGSC) and 603 to 627 (CAGRNDCIVDKIRRKNCPACRLRKC). The nuclear receptor DNA-binding region spans 567-639 (CLICGDEASG…AGMVLGGRKF (73 aa)). S676 carries the phosphoserine modification. Residues 679 to 913 (QDIQLIPPLI…EFPEMMSEVI (235 aa)) enclose the NR LBD domain. Residues 687–933 (LINLLMSIEP…MVKPLLFHKK (247 aa)) are AF2; mediates transcriptional activation. Position 766 (R766) interacts with progesterone.

The protein belongs to the nuclear hormone receptor family. Interacts with SMARD1 and UNC45A. Interacts with CUEDC2; the interaction promotes ubiquitination, decreases sumoylation, and represses transcriptional activity. Interacts with PIAS3; the interaction promotes sumoylation of PR in a hormone-dependent manner, inhibits DNA-binding, and alters nuclear export. Interacts with SP1; the interaction requires ligand-induced phosphorylation on Ser-345 by ERK1/2-MAPK. Interacts with PRMT2. Interacts with NCOA2 and NCOA1. Interacts with KLF9. Interacts with GTF2B. In terms of processing, phosphorylated on multiple serine sites. Several of these sites are hormone-dependent. Phosphorylation on Ser-294 is highly hormone-dependent and modulates ubiquitination and sumoylation on Lys-388. Phosphorylation on Ser-102 and Ser-345 also requires induction by hormone. Basal phosphorylation on Ser-81, Ser-162, Ser-190 and Ser-400 is increased in response to progesterone and can be phosphorylated in vitro by the CDK2-A1 complex. Increased levels of phosphorylation on Ser-400 also in the presence of EGF, heregulin, IGF, PMA and FBS. Phosphorylation at this site by CDK2 is ligand-independent, and increases nuclear translocation and transcriptional activity. Phosphorylation at Ser-162 and Ser-294, but not at Ser-190, is impaired during the G(2)/M phase of the cell cycle. Phosphorylation on Ser-345 by ERK1/2 MAPK is required for interaction with SP1. Sumoylation is hormone-dependent and represses transcriptional activity. Sumoylation on all three sites is enhanced by PIAS3. Desumoylated by SENP1. Sumoylation on Lys-388, the main site of sumoylation, is repressed by ubiquitination on the same site, and modulated by phosphorylation at Ser-294. Post-translationally, ubiquitination is hormone-dependent and represses sumoylation on the same site. Promoted by MAPK-mediated phosphorylation on Ser-294. Ubiquitinated by UBR5, leading to its degradation: UBR5 specifically recognizes and binds ligand-bound PGR when it is not associated with coactivators (NCOAs). In presence of NCOAs, the UBR5-degron is not accessible, preventing its ubiquitination and degradation. In terms of processing, palmitoylated by ZDHHC7 and ZDHHC21. Palmitoylation is required for plasma membrane targeting and for rapid intracellular signaling via ERK and AKT kinases and cAMP generation.

The protein resides in the nucleus. Its subcellular location is the cytoplasm. Its function is as follows. The steroid hormones and their receptors are involved in the regulation of eukaryotic gene expression and affect cellular proliferation and differentiation in target tissues. Transcriptional activator of several progesteron-dependent promoters in a variety of cell types. Involved in activation of SRC-dependent MAPK signaling on hormone stimulation. The polypeptide is Progesterone receptor (PGR) (Gorilla gorilla gorilla (Western lowland gorilla)).